The sequence spans 295 residues: Ectoine dioxygenase (295 aa).

Residue Q129 participates in L-ectoine binding. K135 is a 2-oxoglutarate binding site. Residues H146, D148, and H247 each coordinate Fe cation.

It belongs to the PhyH family. EctD subfamily. In terms of assembly, homodimer. It depends on Fe(2+) as a cofactor.

It carries out the reaction L-ectoine + 2-oxoglutarate + O2 = 5-hydroxyectoine + succinate + CO2. Its function is as follows. Involved in the biosynthesis of 5-hydroxyectoine, called compatible solute, which helps organisms to survive extreme osmotic stress by acting as a highly soluble organic osmolyte. Catalyzes the 2-oxoglutarate-dependent selective hydroxylation of L-ectoine to yield (4S,5S)-5-hydroxyectoine. The polypeptide is Ectoine dioxygenase (Streptomyces avermitilis (strain ATCC 31267 / DSM 46492 / JCM 5070 / NBRC 14893 / NCIMB 12804 / NRRL 8165 / MA-4680)).